The sequence spans 106 residues: uncharacterized protein (106 aa).

Disordered regions lie at residues 27 to 47 (FSDS…DVSD) and 83 to 106 (SPAM…VQSK). Positions 29-39 (DSEDEPDDEAS) are enriched in acidic residues. The span at 94–106 (GIEREDRGGVQSK) shows a compositional bias: basic and acidic residues.

The protein resides in the mitochondrion. This is an uncharacterized protein from Arabidopsis thaliana (Mouse-ear cress).